Consider the following 886-residue polypeptide: Translation initiation factor IF-2 (886 aa).

Disordered stretches follow at residues 1 to 25, 50 to 229, and 253 to 272; these read MSET…LKRP, RRAL…PAEE, and KGAE…TGDE. Positions 50–60 are enriched in basic and acidic residues; that stretch reads RRALGEPHVLR. Residues 63 to 73 show a composition bias toward low complexity; the sequence is APALDVVAPAP. Pro residues predominate over residues 74 to 83; the sequence is QAAPPAPTQQ. The segment covering 84-106 has biased composition (low complexity); it reads PQPRVASRPQPQQRSSSGVILRS. Residues 107–181 are compositionally biased toward basic and acidic residues; the sequence is LTEEEREARS…KRRSESEAKR (75 aa). Positions 185–225 are enriched in low complexity; it reads GGEPAPAGANAAPRKAPALSAAPGSAAPSGQPGPAGAVGAR. Positions 383–553 constitute a tr-type G domain; that stretch reads SRPPVVTIMG…ALQAELLDLK (171 aa). The interval 392–399 is G1; it reads GHVDHGKT. Position 392 to 399 (392 to 399) interacts with GTP; the sequence is GHVDHGKT. The tract at residues 417–421 is G2; the sequence is GITQH. The G3 stretch occupies residues 439–442; the sequence is DTPG. Residues 439–443 and 493–496 each bind GTP; these read DTPGH and NKID. The G4 stretch occupies residues 493-496; it reads NKID. Residues 529 to 531 are G5; that stretch reads SAT.

It belongs to the TRAFAC class translation factor GTPase superfamily. Classic translation factor GTPase family. IF-2 subfamily.

Its subcellular location is the cytoplasm. Its function is as follows. One of the essential components for the initiation of protein synthesis. Protects formylmethionyl-tRNA from spontaneous hydrolysis and promotes its binding to the 30S ribosomal subunits. Also involved in the hydrolysis of GTP during the formation of the 70S ribosomal complex. This is Translation initiation factor IF-2 from Methylocella silvestris (strain DSM 15510 / CIP 108128 / LMG 27833 / NCIMB 13906 / BL2).